Here is a 225-residue protein sequence, read N- to C-terminus: Histone H1.5 (225 aa).

The segment at methionine 1–lysine 23 is disordered. Serine 2 is modified (N-acetylserine). Over residues threonine 9–serine 19 the composition is skewed to low complexity. One can recognise an H15 domain in the interval alanine 37–valine 113. Residues lysine 145–valine 156 show a composition bias toward basic and acidic residues. The interval lysine 145–alanine 225 is disordered. The span at lysine 157–lysine 175 shows a compositional bias: basic residues. The segment covering lysine 176–alanine 208 has biased composition (low complexity).

It belongs to the histone H1/H5 family.

It localises to the nucleus. The protein resides in the chromosome. Histones H1 are necessary for the condensation of nucleosome chains into higher-order structures. The chain is Histone H1.5 (hil-5) from Caenorhabditis elegans.